The sequence spans 193 residues: Molybdenum cofactor guanylyltransferase (193 aa).

GTP is bound by residues 8–10 (LAG), Lys21, Asp67, and Asp98. Asp98 serves as a coordination point for Mg(2+).

The protein belongs to the MobA family. Monomer. Mg(2+) serves as cofactor.

It localises to the cytoplasm. It carries out the reaction Mo-molybdopterin + GTP + H(+) = Mo-molybdopterin guanine dinucleotide + diphosphate. Transfers a GMP moiety from GTP to Mo-molybdopterin (Mo-MPT) cofactor (Moco or molybdenum cofactor) to form Mo-molybdopterin guanine dinucleotide (Mo-MGD) cofactor. This is Molybdenum cofactor guanylyltransferase from Cereibacter sphaeroides (strain ATCC 17029 / ATH 2.4.9) (Rhodobacter sphaeroides).